Reading from the N-terminus, the 455-residue chain is Zinc finger protein ZPR1 homolog (455 aa).

2 C4-type zinc fingers span residues C28–C60 and C247–C279.

Belongs to the ZPR1 family.

The protein resides in the nucleus. This Caenorhabditis elegans protein is Zinc finger protein ZPR1 homolog.